Here is a 435-residue protein sequence, read N- to C-terminus: Serine/threonine-protein kinase 40 (435 aa).

The region spanning 35–332 is the Protein kinase domain; it reads FILGPRLGNS…EELDSLSSII (298 aa). Residues 41 to 49 and Lys-66 contribute to the ATP site; that span reads LGNSPVPSI. Asp-197 functions as the Proton acceptor in the catalytic mechanism.

The protein belongs to the protein kinase superfamily. CAMK Ser/Thr protein kinase family.

Its subcellular location is the nucleus. The protein resides in the cytoplasm. The catalysed reaction is L-seryl-[protein] + ATP = O-phospho-L-seryl-[protein] + ADP + H(+). The enzyme catalyses L-threonyl-[protein] + ATP = O-phospho-L-threonyl-[protein] + ADP + H(+). Its function is as follows. May be a negative regulator of NF-kappa-B and p53-mediated gene transcription. The polypeptide is Serine/threonine-protein kinase 40 (STK40) (Gallus gallus (Chicken)).